Consider the following 217-residue polypeptide: Snake venom metalloproteinase lebetase-4 (217 aa).

A propeptide spanning residues 1–14 (SCRKKASQLNLTPE) is cleaved from the precursor. Q15 carries the post-translational modification Pyrrolidone carboxylic acid. A Peptidase M12B domain is found at 21–217 (RYIELVIVAD…HNPQCILNQP (197 aa)). 2 residues coordinate Ca(2+): E24 and D108. 3 disulfide bridges follow: C132-C212, C172-C196, and C174-C179. Residue H157 coordinates Zn(2+). E158 is a catalytic residue. The Zn(2+) site is built by H161 and H167. Positions 212 and 215 each coordinate Ca(2+).

This sequence belongs to the venom metalloproteinase (M12B) family. P-I subfamily. As to quaternary structure, monomer. The cofactor is Zn(2+). As to expression, expressed by the venom gland.

Its subcellular location is the secreted. Fibrinolytic and caseinolytic activities are inhibited by Cd(2+), Cu(2+) and Co(2+) ions. Not inhibited by Mg(2+), Ca(2+) and Ba(2+). Also inhibited by EDTA, EGTA and 1,10-phenanthroline. Functionally, snake venom zinc metalloprotease that hydrolyzes the Aalpha-chain and more slowly the Bbeta-chain of fibrin and fibrinogen. Also hydrolyzes casein and B-chain of oxidized insulin. Its fibrinolytic activity is direct, without any plasminogen activation. Inhibits ADP-induced and collagen-induced platelet aggregation. Shows low hemorrhagic activity. Cleaves the plasma proteinase inhibitors alpha(2)-macroglobulin (A2M) and alpha(2)M-related pregnancy zone protein (PZP), and is inhibited by them. The polypeptide is Snake venom metalloproteinase lebetase-4 (Macrovipera lebetinus (Levantine viper)).